Here is a 347-residue protein sequence, read N- to C-terminus: GMP reductase (347 aa).

Residue 108–131 (ADFEKTKQILDLNPALNFVCIDVA) participates in NADP(+) binding. K(+)-binding residues include Gly181 and Gly183. Catalysis depends on Cys186, which acts as the Thioimidate intermediate. NADP(+) is bound at residue 216-239 (IVSDGGCTTPGDVAKAFGGGADFV).

This sequence belongs to the IMPDH/GMPR family. GuaC type 1 subfamily. In terms of assembly, homotetramer.

The enzyme catalyses IMP + NH4(+) + NADP(+) = GMP + NADPH + 2 H(+). Its function is as follows. Catalyzes the irreversible NADPH-dependent deamination of GMP to IMP. It functions in the conversion of nucleobase, nucleoside and nucleotide derivatives of G to A nucleotides, and in maintaining the intracellular balance of A and G nucleotides. The protein is GMP reductase of Escherichia coli (strain SMS-3-5 / SECEC).